The primary structure comprises 471 residues: ATP synthase subunit beta (471 aa).

Position 156–163 (156–163) interacts with ATP; that stretch reads GGAGVGKT.

This sequence belongs to the ATPase alpha/beta chains family. In terms of assembly, F-type ATPases have 2 components, CF(1) - the catalytic core - and CF(0) - the membrane proton channel. CF(1) has five subunits: alpha(3), beta(3), gamma(1), delta(1), epsilon(1). CF(0) has three main subunits: a(1), b(2) and c(9-12). The alpha and beta chains form an alternating ring which encloses part of the gamma chain. CF(1) is attached to CF(0) by a central stalk formed by the gamma and epsilon chains, while a peripheral stalk is formed by the delta and b chains.

It is found in the cell inner membrane. It catalyses the reaction ATP + H2O + 4 H(+)(in) = ADP + phosphate + 5 H(+)(out). Produces ATP from ADP in the presence of a proton gradient across the membrane. The catalytic sites are hosted primarily by the beta subunits. This is ATP synthase subunit beta from Nitratidesulfovibrio vulgaris (strain DSM 19637 / Miyazaki F) (Desulfovibrio vulgaris).